A 113-amino-acid chain; its full sequence is MNNTLSKRLCLTAMLALGAVVYTTSAFANTSKLIIESGDSAQSRQHAAMEKEQWNDTRSLRQKVNTRTEKEWDKADAAFDNRDKCEQSANLNAYWEPNTLRCLDRRTGRTVAP.

An N-terminal signal peptide occupies residues 1 to 28; the sequence is MNNTLSKRLCLTAMLALGAVVYTTSAFA. The interval 44–67 is disordered; sequence RQHAAMEKEQWNDTRSLRQKVNTR. Over residues 47 to 59 the composition is skewed to basic and acidic residues; that stretch reads AAMEKEQWNDTRS.

Belongs to the UPF0482 family.

This Citrobacter koseri (strain ATCC BAA-895 / CDC 4225-83 / SGSC4696) protein is UPF0482 protein CKO_01577.